The sequence spans 55 residues: ATP synthase F(0) complex subunit 8 (55 aa).

The helical transmembrane segment at 4 to 24 (LNPAPWFTILVFSWMIFLAII) threads the bilayer. Residues 32-41 (TSPNDSSPLS) show a composition bias toward polar residues. The disordered stretch occupies residues 32–55 (TSPNDSSPLSTEKHKTESWDWPWQ).

Belongs to the ATPase protein 8 family. As to quaternary structure, component of the ATP synthase complex composed at least of ATP5F1A/subunit alpha, ATP5F1B/subunit beta, ATP5MC1/subunit c (homooctomer), MT-ATP6/subunit a, MT-ATP8/subunit 8, ATP5ME/subunit e, ATP5MF/subunit f, ATP5MG/subunit g, ATP5MK/subunit k, ATP5MJ/subunit j, ATP5F1C/subunit gamma, ATP5F1D/subunit delta, ATP5F1E/subunit epsilon, ATP5PF/subunit F6, ATP5PB/subunit b, ATP5PD/subunit d, ATP5PO/subunit OSCP. ATP synthase complex consists of a soluble F(1) head domain (subunits alpha(3) and beta(3)) - the catalytic core - and a membrane F(0) domain - the membrane proton channel (subunits c, a, 8, e, f, g, k and j). These two domains are linked by a central stalk (subunits gamma, delta, and epsilon) rotating inside the F1 region and a stationary peripheral stalk (subunits F6, b, d, and OSCP).

The protein localises to the mitochondrion membrane. Subunit 8, of the mitochondrial membrane ATP synthase complex (F(1)F(0) ATP synthase or Complex V) that produces ATP from ADP in the presence of a proton gradient across the membrane which is generated by electron transport complexes of the respiratory chain. ATP synthase complex consist of a soluble F(1) head domain - the catalytic core - and a membrane F(1) domain - the membrane proton channel. These two domains are linked by a central stalk rotating inside the F(1) region and a stationary peripheral stalk. During catalysis, ATP synthesis in the catalytic domain of F(1) is coupled via a rotary mechanism of the central stalk subunits to proton translocation. In vivo, can only synthesize ATP although its ATP hydrolase activity can be activated artificially in vitro. Part of the complex F(0) domain. The protein is ATP synthase F(0) complex subunit 8 of Formosania lacustris (Oriental stream loach).